The sequence spans 438 residues: Aspartate--tRNA(Asp/Asn) ligase (438 aa).

An L-aspartate-binding site is contributed by Glu-176. The tract at residues 198–201 is aspartate; sequence QLYK. Arg-220 contacts L-aspartate. ATP-binding positions include 220–222, 228–230, and Glu-361; these read RAE and RHL. Residues Glu-361 and Ser-364 each coordinate Mg(2+). L-aspartate-binding residues include Ser-364 and Arg-368. 409–412 contributes to the ATP binding site; sequence GADR.

It belongs to the class-II aminoacyl-tRNA synthetase family. Type 2 subfamily. In terms of assembly, homodimer. Mg(2+) serves as cofactor.

The protein localises to the cytoplasm. The catalysed reaction is tRNA(Asx) + L-aspartate + ATP = L-aspartyl-tRNA(Asx) + AMP + diphosphate. Functionally, aspartyl-tRNA synthetase with relaxed tRNA specificity since it is able to aspartylate not only its cognate tRNA(Asp) but also tRNA(Asn). Reaction proceeds in two steps: L-aspartate is first activated by ATP to form Asp-AMP and then transferred to the acceptor end of tRNA(Asp/Asn). This Methanocaldococcus jannaschii (strain ATCC 43067 / DSM 2661 / JAL-1 / JCM 10045 / NBRC 100440) (Methanococcus jannaschii) protein is Aspartate--tRNA(Asp/Asn) ligase.